Reading from the N-terminus, the 603-residue chain is Elongation factor 4 (603 aa).

Residues 7-189 form the tr-type G domain; that stretch reads KKIRNFCIIA…SVVKNVPPPE (183 aa). Residues 19 to 24 and 136 to 139 contribute to the GTP site; these read DHGKST and NKID.

Belongs to the TRAFAC class translation factor GTPase superfamily. Classic translation factor GTPase family. LepA subfamily.

The protein localises to the cell membrane. It catalyses the reaction GTP + H2O = GDP + phosphate + H(+). Its function is as follows. Required for accurate and efficient protein synthesis under certain stress conditions. May act as a fidelity factor of the translation reaction, by catalyzing a one-codon backward translocation of tRNAs on improperly translocated ribosomes. Back-translocation proceeds from a post-translocation (POST) complex to a pre-translocation (PRE) complex, thus giving elongation factor G a second chance to translocate the tRNAs correctly. Binds to ribosomes in a GTP-dependent manner. The chain is Elongation factor 4 from Acetivibrio thermocellus (strain ATCC 27405 / DSM 1237 / JCM 9322 / NBRC 103400 / NCIMB 10682 / NRRL B-4536 / VPI 7372) (Clostridium thermocellum).